Consider the following 356-residue polypeptide: Biotin synthase (356 aa).

Residues 51 to 270 enclose the Radical SAM core domain; it reads NKVQCNQLLN…IALARIMMPL (220 aa). [4Fe-4S] cluster is bound by residues Cys-66, Cys-70, and Cys-73. Residues Cys-110, Cys-141, Cys-201, and Arg-274 each contribute to the [2Fe-2S] cluster site. The segment at 310–356 is disordered; that stretch reads PGDNKDRSLFDRLGLEPRDDHGVHEHSSHSHTHDQGHDHGPHGHSHG. A compositionally biased stretch (basic and acidic residues) spans 312-350; the sequence is DNKDRSLFDRLGLEPRDDHGVHEHSSHSHTHDQGHDHGP.

Belongs to the radical SAM superfamily. Biotin synthase family. Homodimer. It depends on [4Fe-4S] cluster as a cofactor. [2Fe-2S] cluster is required as a cofactor.

The catalysed reaction is (4R,5S)-dethiobiotin + (sulfur carrier)-SH + 2 reduced [2Fe-2S]-[ferredoxin] + 2 S-adenosyl-L-methionine = (sulfur carrier)-H + biotin + 2 5'-deoxyadenosine + 2 L-methionine + 2 oxidized [2Fe-2S]-[ferredoxin]. It participates in cofactor biosynthesis; biotin biosynthesis; biotin from 7,8-diaminononanoate: step 2/2. Functionally, catalyzes the conversion of dethiobiotin (DTB) to biotin by the insertion of a sulfur atom into dethiobiotin via a radical-based mechanism. The sequence is that of Biotin synthase from Rhodopseudomonas palustris (strain BisB18).